Consider the following 248-residue polypeptide: Ras-like protein family member 11B (248 aa).

Positions 30 to 248 are small GTPase-like; that stretch reads ASSRVIKIAV…SSKVRTATSV (219 aa). GTP is bound by residues 41-48, 88-99, and 153-156; these read GGSGVGKT, DTPGVQINEQNL, and NKAD. The segment at 206–228 is disordered; the sequence is QNTGTSERRKNSIIPRPKSPNMQ.

Belongs to the small GTPase superfamily. Ras family.

The catalysed reaction is GTP + H2O = GDP + phosphate + H(+). This Xenopus laevis (African clawed frog) protein is Ras-like protein family member 11B.